A 663-amino-acid chain; its full sequence is Innate immunity activator protein (663 aa).

The disordered stretch occupies residues 1–73; sequence MLQMPKLNEI…PGPGWDQCSP (73 aa). The span at 23–47 shows a compositional bias: low complexity; that stretch reads EGRWAGPTGPEAARPARGARGQARG. Basic and acidic residues predominate over residues 50–59; it reads ARWDSWEHSR. The stretch at 117–147 forms a coiled coil; sequence NAVRKQQRALEARLEACLEELRRLCLREAEL. The Nuclear localization signal (NLS) 1 motif lies at 164–170; the sequence is PKVRRRI. Disordered stretches follow at residues 219-363 and 375-405; these read RQRK…SSLW and IRNV…QSLR. Residues 225 to 246 show a composition bias toward basic and acidic residues; it reads ALQEEKKLRDLQRCLGDRRRNS. Over residues 259-272 the composition is skewed to low complexity; sequence ELSASDDSSLSDGL. Positions 282 to 298 are enriched in pro residues; sequence PKPPPESPAPPSRPLPP. The segment covering 327–340 has biased composition (basic and acidic residues); the sequence is TSLDHPYEKPRKSS. The Nuclear localization signal (NLS) 2 signature appears at 332-338; the sequence is PYEKPRK. Over residues 349 to 361 the composition is skewed to polar residues; that stretch reads PATTPQDQPNPSS. Positions 422 to 428 match the Nuclear localization signal (NLS) 3 motif; that stretch reads PRRRPTH. Residues 448–483 are disordered; the sequence is PACHSCSEDSGSDVSSISHPTSPGSSSPDISFLRPL. Residues 455-475 show a composition bias toward low complexity; that stretch reads EDSGSDVSSISHPTSPGSSSP.

As to quaternary structure, interacts with IRAK1, NOD2 and RIPK2; the interaction takes place upon PRR stimulation. Interacts with YWHAQ/14-3-3T; the interaction increases upon PRR stimulation and is required for cellular signaling pathway activation and cytokine secretion. Interacts (via N-terminal domain) with CYTH1 and CYTH2 (via their N-terminal domains). Interacts with FBXW11 and BTRC; associates with SCF E3 ubiquitin-protein ligase complexes.

The protein localises to the nucleus. It is found in the cytoplasm. Its function is as follows. Expressed in peripheral macrophages and intestinal myeloid-derived cells, is required for optimal PRR (pattern recognition receptor)-induced signaling, cytokine secretion, and bacterial clearance. Upon stimulation of a broad range of PRRs (pattern recognition receptor) such as NOD2 or TLR2, TLR3, TLR4, TLR5, TLR7 and TLR9, associates with YWHAQ/14-3-3T, which in turn leads to the recruitment and activation of MAP kinases and NF-kappa-B signaling complexes that amplifies PRR-induced downstream signals and cytokine secretion. In the intestine, regulates adherens junction stability by regulating the degradation of CYTH1 and CYTH2, probably acting as substrate cofactor for SCF E3 ubiquitin-protein ligase complexes. Stabilizes adherens junctions by limiting CYTH1-dependent ARF6 activation. The chain is Innate immunity activator protein from Mus musculus (Mouse).